The sequence spans 567 residues: Hydroxylamine reductase 2 (567 aa).

Positions 5, 8, 17, and 23 each coordinate [4Fe-4S] cluster. Hybrid [4Fe-2O-2S] cluster-binding residues include His-262, Glu-286, Cys-330, Cys-421, Cys-449, Cys-474, Glu-509, and Lys-511. Cysteine persulfide is present on Cys-421.

It belongs to the HCP family. [4Fe-4S] cluster serves as cofactor. The cofactor is hybrid [4Fe-2O-2S] cluster.

It localises to the cytoplasm. The catalysed reaction is A + NH4(+) + H2O = hydroxylamine + AH2 + H(+). Its function is as follows. Catalyzes the reduction of hydroxylamine to form NH(3) and H(2)O. This Clostridium acetobutylicum (strain ATCC 824 / DSM 792 / JCM 1419 / IAM 19013 / LMG 5710 / NBRC 13948 / NRRL B-527 / VKM B-1787 / 2291 / W) protein is Hydroxylamine reductase 2.